The chain runs to 170 residues: Transcription factor E (170 aa).

The region spanning 1–93 (MKDAYLYVVE…AWYVDDEIIR (93 aa)) is the HTH TFE/IIEalpha-type domain.

The protein belongs to the TFE family. Monomer. Interaction with RNA polymerase subunits RpoF and RpoE is necessary for Tfe stimulatory transcription activity. Able to interact with Tbp and RNA polymerase in the absence of DNA promoter. Interacts both with the preinitiation and elongation complexes.

Its function is as follows. Transcription factor that plays a role in the activation of archaeal genes transcribed by RNA polymerase. Facilitates transcription initiation by enhancing TATA-box recognition by TATA-box-binding protein (Tbp), and transcription factor B (Tfb) and RNA polymerase recruitment. Not absolutely required for transcription in vitro, but particularly important in cases where Tbp or Tfb function is not optimal. It dynamically alters the nucleic acid-binding properties of RNA polymerases by stabilizing the initiation complex and destabilizing elongation complexes. Seems to translocate with the RNA polymerase following initiation and acts by binding to the non template strand of the transcription bubble in elongation complexes. This Pyrobaculum arsenaticum (strain DSM 13514 / JCM 11321 / PZ6) protein is Transcription factor E.